Reading from the N-terminus, the 250-residue chain is Small ribosomal subunit protein uS2 (250 aa).

This sequence belongs to the universal ribosomal protein uS2 family.

This chain is Small ribosomal subunit protein uS2, found in Variovorax paradoxus (strain S110).